A 287-amino-acid chain; its full sequence is ATP synthase gamma chain (287 aa).

This sequence belongs to the ATPase gamma chain family. F-type ATPases have 2 components, CF(1) - the catalytic core - and CF(0) - the membrane proton channel. CF(1) has five subunits: alpha(3), beta(3), gamma(1), delta(1), epsilon(1). CF(0) has three main subunits: a, b and c.

It localises to the cell inner membrane. Functionally, produces ATP from ADP in the presence of a proton gradient across the membrane. The gamma chain is believed to be important in regulating ATPase activity and the flow of protons through the CF(0) complex. This is ATP synthase gamma chain from Colwellia maris.